Reading from the N-terminus, the 419-residue chain is Metacaspase-1B (419 aa).

A disordered region spans residues 1-109 (MYHPNYNYPP…PPMEAQQFGK (109 aa)). A compositionally biased stretch (pro residues) spans 33 to 50 (SPPPPQPYYSNGYPPPSQ). Residues 51–66 (SPHSYSPPQYPPHGQY) show a composition bias toward low complexity. A compositionally biased stretch (polar residues) spans 82–93 (QYRSYHSHSPSW). Catalysis depends on residues His210 and Cys266.

This sequence belongs to the peptidase C14B family.

In terms of biological role, involved in cell death (apoptosis). The chain is Metacaspase-1B (casB) from Aspergillus oryzae (strain ATCC 42149 / RIB 40) (Yellow koji mold).